The chain runs to 333 residues: GTP 3',8-cyclase (333 aa).

In terms of domain architecture, Radical SAM core spans 7–221 (KFGRVHDYIR…FEACNEAGYE (215 aa)). GTP is bound at residue Arg16. 2 residues coordinate [4Fe-4S] cluster: Cys23 and Cys27. Tyr29 contributes to the S-adenosyl-L-methionine binding site. Cys30 lines the [4Fe-4S] cluster pocket. Residue Arg66 coordinates GTP. Gly70 lines the S-adenosyl-L-methionine pocket. Position 97 (Thr97) interacts with GTP. Ser121 provides a ligand contact to S-adenosyl-L-methionine. Lys158 is a GTP binding site. Met192 is a binding site for S-adenosyl-L-methionine. The [4Fe-4S] cluster site is built by Cys257 and Cys260. Residue 262-264 (RLR) participates in GTP binding. Cys274 lines the [4Fe-4S] cluster pocket.

The protein belongs to the radical SAM superfamily. MoaA family. In terms of assembly, monomer and homodimer. [4Fe-4S] cluster serves as cofactor.

The enzyme catalyses GTP + AH2 + S-adenosyl-L-methionine = (8S)-3',8-cyclo-7,8-dihydroguanosine 5'-triphosphate + 5'-deoxyadenosine + L-methionine + A + H(+). It functions in the pathway cofactor biosynthesis; molybdopterin biosynthesis. Its function is as follows. Catalyzes the cyclization of GTP to (8S)-3',8-cyclo-7,8-dihydroguanosine 5'-triphosphate. The chain is GTP 3',8-cyclase from Listeria monocytogenes serotype 4b (strain CLIP80459).